A 406-amino-acid polypeptide reads, in one-letter code: Phosphopentomutase (406 aa).

6 residues coordinate Mn(2+): Asp10, Asp305, His310, Asp346, His347, and His358.

It belongs to the phosphopentomutase family. Requires Mn(2+) as cofactor.

The protein localises to the cytoplasm. The enzyme catalyses 2-deoxy-alpha-D-ribose 1-phosphate = 2-deoxy-D-ribose 5-phosphate. The catalysed reaction is alpha-D-ribose 1-phosphate = D-ribose 5-phosphate. It participates in carbohydrate degradation; 2-deoxy-D-ribose 1-phosphate degradation; D-glyceraldehyde 3-phosphate and acetaldehyde from 2-deoxy-alpha-D-ribose 1-phosphate: step 1/2. In terms of biological role, isomerase that catalyzes the conversion of deoxy-ribose 1-phosphate (dRib-1-P) and ribose 1-phosphate (Rib-1-P) to deoxy-ribose 5-phosphate (dRib-5-P) and ribose 5-phosphate (Rib-5-P), respectively. This chain is Phosphopentomutase, found in Sinorhizobium fredii (strain NBRC 101917 / NGR234).